We begin with the raw amino-acid sequence, 260 residues long: MTDILNKILATKAQEVAAQKAAVNAEHIRALAAEAAPVRSFIDSIRGKHRLNLPAVIAEIKKASPSKGLIRPDFRPAEIARAYENAGAACLSVLTDEPYFQGSPEYLKQAREAVLLPVLRKDFIIDEYQVYQARAWGADAVLLIAAALEQGQLERFEALAHELGMTVLLELHDETELEKCRNLTTPLWGVNNRNLRTFEVSLDQTLSLLPALEGKTVVTESGITGKADVEFMRARGVHTFLIGETFMRADDIGAEVGKLF.

It belongs to the TrpC family.

It carries out the reaction 1-(2-carboxyphenylamino)-1-deoxy-D-ribulose 5-phosphate + H(+) = (1S,2R)-1-C-(indol-3-yl)glycerol 3-phosphate + CO2 + H2O. The protein operates within amino-acid biosynthesis; L-tryptophan biosynthesis; L-tryptophan from chorismate: step 4/5. This chain is Indole-3-glycerol phosphate synthase, found in Neisseria gonorrhoeae (strain ATCC 700825 / FA 1090).